A 418-amino-acid polypeptide reads, in one-letter code: Phosphatidylcholine:ceramide cholinephosphotransferase 1 (418 aa).

The 64-residue stretch at 12–75 folds into the SAM domain; that stretch reads WSPKKVADWL…LDMIETLKME (64 aa). Serine 13 carries the phosphoserine modification. 5 consecutive transmembrane segments (helical) span residues 141-161, 189-209, 220-240, 281-301, and 309-329; these read FLAF…ISVV, FSIC…QWLL, FFCI…VTTL, MCGD…YLFI, and LWWY…CILL. Histidine 290 is an active-site residue. Residues histidine 333 and aspartate 337 contribute to the active site. The helical transmembrane segment at 335–352 threads the bilayer; sequence TVDVVVAYYITTRLFWWY.

Belongs to the sphingomyelin synthase family. Widely expressed. Highest expression in the cardiovascular system.

It localises to the golgi apparatus membrane. It carries out the reaction an N-acylsphing-4-enine + a 1,2-diacyl-sn-glycero-3-phosphocholine = a sphingomyelin + a 1,2-diacyl-sn-glycerol. The enzyme catalyses 1-(9Z-octadecenoyl)-2-acyl-sn-3-glycerol + a sphingomyelin = a 1-(9Z-octadecenoyl)-2-acyl-sn-glycero-3-phosphocholine + an N-acylsphing-4-enine. The catalysed reaction is N-hexadecanoylsphinganine + a 1,2-diacyl-sn-glycero-3-phosphocholine = N-hexadecanoyl-sphinganine-1-phosphocholine + a 1,2-diacyl-sn-glycerol. It catalyses the reaction N-hexadecanoyl-(4R)-hydroxysphinganine + a 1,2-diacyl-sn-glycero-3-phosphocholine = N-hexadecanoyl-(4R)-hydroxysphinganine-phosphocholine + a 1,2-diacyl-sn-glycerol. It carries out the reaction an N-acylsphing-4-enine + a 1,2-diacyl-sn-glycero-3-phosphoethanolamine = an N-acylsphing-4-enine 1-phosphoethanolamine + a 1,2-diacyl-sn-glycerol. The protein operates within sphingolipid metabolism. Functionally, major sphingomyelin synthase at the Golgi apparatus. Catalyzes the reversible transfer of phosphocholine moiety in sphingomyelin biosynthesis: in the forward reaction transfers phosphocholine head group of phosphatidylcholine (PC) on to ceramide (CER) to form ceramide phosphocholine (sphingomyelin, SM) and diacylglycerol (DAG) as by-product, and in the reverse reaction transfers phosphocholine from SM to DAG to form PC and CER. The direction of the reaction depends on the levels of CER and DAG in Golgi membranes. Converts the newly synthesized CER, that is transported from the endoplasmic reticulum to the trans-Golgi by the Cer transport protein (CERT), to SM. Can form a heteromeric complex with glucosylceramide synthase (GCS) increasing SMS activity and reducing glucosylceramide synthesis, a critical mechanism that controls the metabolic fate of CER in the Golgi. Does not use free phosphorylcholine or CDP-choline as donor. Can also transfer phosphoethanolamine head group of phosphatidylethanolamine (PE) on to CER to form ceramide phosphoethanolamine (CPE). Regulates receptor-mediated signal transduction via mitogenic DAG and proapoptotic CER, as well as via SM, a structural component of membrane rafts that serve as platforms for signal transduction and protein sorting. Plays a role in secretory transport via regulation of DAG pool at the Golgi apparatus and its downstream effects on PRKD1. The chain is Phosphatidylcholine:ceramide cholinephosphotransferase 1 (SGMS1) from Sus scrofa (Pig).